Reading from the N-terminus, the 615-residue chain is Zinc finger protein 181 (615 aa).

One can recognise a KRAB domain in the interval 48–120 (VTFSDVAIDF…EKKLSKGLIP (73 aa)). Glycyl lysine isopeptide (Lys-Gly) (interchain with G-Cter in SUMO2) cross-links involve residues Lys-153 and Lys-170. 11 consecutive C2H2-type zinc fingers follow at residues 281-303 (YTCS…WRIH), 309-331 (YECR…LISH), 337-359 (YKCI…QSTH), 365-387 (YECM…LRIH), 393-415 (YECR…QKIH), 421-443 (YECR…QRIH), 449-471 (YECN…QSIH), 477-499 (FECQ…LRNH), 505-527 (YECS…HRIH), 533-555 (YECI…QRIH), and 561-583 (YKCN…QRVH).

This sequence belongs to the krueppel C2H2-type zinc-finger protein family.

The protein resides in the nucleus. Its function is as follows. May be involved in transcriptional regulation. The sequence is that of Zinc finger protein 181 (ZNF181) from Pongo abelii (Sumatran orangutan).